The following is a 362-amino-acid chain: MKFGWIMANDEDWEERKETVKDSLESSIPAVMVYEEDIEKVKELGNIKTISKNPNSDIVVIDKGDDLTILFDAKKEGKETGVFISIECKEDEEYASEVSRYDYVDYIILEGKDWNIIPLENLIADLFDENIKIVSLAKDINDARTAYEILERGVDGVLYVPKDINDVKDFATLIEKMNSEKLDLDCATITKVEAIGSGDRVCIDTCSMMEMGEGMLIGSYSRALFLVHAETVENPYVATRPFRVNAGPVHAYVLCTGNKTRYLSELKAGDGILIVDKDGMTREGIVGRVKIEKRPLMLIEAEYVGGEIVRTIVQNAETIRLVNENGAPISVVDLKVGDKVKLKIDTNARHFGMAIQETIIEK.

Belongs to the archaeal-type DHQ synthase family.

It carries out the reaction 2-amino-2,3,7-trideoxy-D-lyxo-hept-6-ulosonate + NAD(+) + H2O = 3-dehydroquinate + NH4(+) + NADH + H(+). In terms of biological role, catalyzes the oxidative deamination and cyclization of 2-amino-3,7-dideoxy-D-threo-hept-6-ulosonic acid (ADH) to yield 3-dehydroquinate (DHQ), which is fed into the canonical shikimic pathway of aromatic amino acid biosynthesis. The polypeptide is 3-dehydroquinate synthase (Methanococcus aeolicus (strain ATCC BAA-1280 / DSM 17508 / OCM 812 / Nankai-3)).